The following is a 340-amino-acid chain: Uroporphyrinogen decarboxylase (340 aa).

Residues 21–25 (RQAGR), phenylalanine 40, aspartate 71, tyrosine 148, serine 203, and histidine 316 each bind substrate.

The protein belongs to the uroporphyrinogen decarboxylase family. In terms of assembly, homodimer.

Its subcellular location is the cytoplasm. It carries out the reaction uroporphyrinogen III + 4 H(+) = coproporphyrinogen III + 4 CO2. It functions in the pathway porphyrin-containing compound metabolism; protoporphyrin-IX biosynthesis; coproporphyrinogen-III from 5-aminolevulinate: step 4/4. Its function is as follows. Catalyzes the decarboxylation of four acetate groups of uroporphyrinogen-III to yield coproporphyrinogen-III. The protein is Uroporphyrinogen decarboxylase of Campylobacter jejuni subsp. jejuni serotype O:2 (strain ATCC 700819 / NCTC 11168).